The chain runs to 499 residues: Glucose-6-phosphate exchanger SLC37A2 (499 aa).

Residues tyrosine 21–arginine 40 form a helical membrane-spanning segment. N-linked (GlcNAc...) asparagine glycans are attached at residues asparagine 53, asparagine 62, and asparagine 66. The next 11 membrane-spanning stretches (helical) occupy residues glycine 86–phenylalanine 106, leucine 116–tryptophan 136, isoleucine 138–glycine 158, alanine 187–leucine 207, serine 208–valine 228, leucine 302–isoleucine 322, glycine 334–isoleucine 354, alanine 362–leucine 382, valine 391–alanine 411, alanine 434–leucine 454, and glycine 458–valine 478.

It belongs to the major facilitator superfamily. Organophosphate:Pi antiporter (OPA) (TC 2.A.1.4) family.

It localises to the endoplasmic reticulum membrane. It catalyses the reaction D-glucose 6-phosphate(in) + phosphate(out) = D-glucose 6-phosphate(out) + phosphate(in). Inorganic phosphate and glucose-6-phosphate antiporter. May transport cytoplasmic glucose-6-phosphate into the lumen of the endoplasmic reticulum and translocate inorganic phosphate into the opposite direction. The chain is Glucose-6-phosphate exchanger SLC37A2 from Xenopus tropicalis (Western clawed frog).